We begin with the raw amino-acid sequence, 236 residues long: tRNA1(Val) (adenine(37)-N6)-methyltransferase (236 aa).

This sequence belongs to the methyltransferase superfamily. tRNA (adenine-N(6)-)-methyltransferase family.

It localises to the cytoplasm. The enzyme catalyses adenosine(37) in tRNA1(Val) + S-adenosyl-L-methionine = N(6)-methyladenosine(37) in tRNA1(Val) + S-adenosyl-L-homocysteine + H(+). Specifically methylates the adenine in position 37 of tRNA(1)(Val) (anticodon cmo5UAC). The sequence is that of tRNA1(Val) (adenine(37)-N6)-methyltransferase from Histophilus somni (strain 2336) (Haemophilus somnus).